The chain runs to 542 residues: Chaperonin GroEL 1 (542 aa).

Residues 29–32, 86–90, Gly-415, 479–481, and Asp-495 contribute to the ATP site; these read TIGP, DGTTT, and NAA.

Belongs to the chaperonin (HSP60) family. In terms of assembly, forms a cylinder of 14 subunits composed of two heptameric rings stacked back-to-back. Interacts with the co-chaperonin GroES.

It localises to the cytoplasm. The catalysed reaction is ATP + H2O + a folded polypeptide = ADP + phosphate + an unfolded polypeptide.. Functionally, together with its co-chaperonin GroES, plays an essential role in assisting protein folding. The GroEL-GroES system forms a nano-cage that allows encapsulation of the non-native substrate proteins and provides a physical environment optimized to promote and accelerate protein folding. The sequence is that of Chaperonin GroEL 1 from Streptomyces avermitilis (strain ATCC 31267 / DSM 46492 / JCM 5070 / NBRC 14893 / NCIMB 12804 / NRRL 8165 / MA-4680).